We begin with the raw amino-acid sequence, 419 residues long: Serine hydroxymethyltransferase (419 aa).

(6S)-5,6,7,8-tetrahydrofolate is bound by residues Leu121 and 125 to 127 (GHL). The residue at position 229 (Lys229) is an N6-(pyridoxal phosphate)lysine. 354–356 (SPF) lines the (6S)-5,6,7,8-tetrahydrofolate pocket.

The protein belongs to the SHMT family. Homodimer. Requires pyridoxal 5'-phosphate as cofactor.

The protein resides in the cytoplasm. The catalysed reaction is (6R)-5,10-methylene-5,6,7,8-tetrahydrofolate + glycine + H2O = (6S)-5,6,7,8-tetrahydrofolate + L-serine. It participates in one-carbon metabolism; tetrahydrofolate interconversion. It functions in the pathway amino-acid biosynthesis; glycine biosynthesis; glycine from L-serine: step 1/1. Functionally, catalyzes the reversible interconversion of serine and glycine with tetrahydrofolate (THF) serving as the one-carbon carrier. This reaction serves as the major source of one-carbon groups required for the biosynthesis of purines, thymidylate, methionine, and other important biomolecules. Also exhibits THF-independent aldolase activity toward beta-hydroxyamino acids, producing glycine and aldehydes, via a retro-aldol mechanism. The protein is Serine hydroxymethyltransferase of Coxiella burnetii (strain CbuK_Q154) (Coxiella burnetii (strain Q154)).